Consider the following 363-residue polypeptide: Type-2 angiotensin II receptor (363 aa).

Residues methionine 1–glutamate 45 are Extracellular-facing. Asparagine 4, asparagine 13, asparagine 24, asparagine 29, and asparagine 34 each carry an N-linked (GlcNAc...) asparagine glycan. Disulfide bonds link cysteine 35–cysteine 290 and cysteine 117–cysteine 195. A helical transmembrane segment spans residues alanine 46–cysteine 70. Residues cysteine 71–serine 80 are Cytoplasmic-facing. Residues isoleucine 81–tyrosine 104 traverse the membrane as a helical segment. Angiotensin II contacts are provided by tyrosine 103 and tyrosine 104. The Extracellular segment spans residues serine 105–proline 114. A helical transmembrane segment spans residues valine 115–valine 140. At aspartate 141–glutamine 159 the chain is on the cytoplasmic side. The chain crosses the membrane as a helical span at residues alanine 160–phenylalanine 181. Residues arginine 182, tyrosine 204, and lysine 215 each contribute to the angiotensin II site. Topologically, residues arginine 182–glutamine 206 are extracellular. The helical transmembrane segment at tryptophan 207 to phenylalanine 232 threads the bilayer. Residues glycine 233–methionine 257 are Cytoplasmic-facing. The helical transmembrane segment at alanine 258–leucine 281 threads the bilayer. Position 279 (aspartate 279) interacts with angiotensin II. The Extracellular segment spans residues threonine 282–alanine 294. Residues valine 295–phenylalanine 320 traverse the membrane as a helical segment. Aspartate 297 contributes to the angiotensin II binding site. Over valine 321–serine 363 the chain is Cytoplasmic. Residues arginine 324–phenylalanine 333 form a helix VIII region. Phosphoserine; by PKC is present on serine 354.

It belongs to the G-protein coupled receptor 1 family. Interacts with MTUS1. As to expression, abundant expression in fetal tissues, immature brain, skin wound and atretic ovarian follicles.

It localises to the cell membrane. In terms of biological role, receptor for angiotensin II, a vasoconstricting peptide. Signals primarily via a non-canonical G-protein- and beta-arrestin independent pathways. Cooperates with MTUS1 to inhibit ERK2 activation and cell proliferation. The protein is Type-2 angiotensin II receptor of Rattus norvegicus (Rat).